Consider the following 123-residue polypeptide: Small ribosomal subunit protein uS12 (123 aa).

D89 is modified (3-methylthioaspartic acid).

Belongs to the universal ribosomal protein uS12 family. In terms of assembly, part of the 30S ribosomal subunit. Contacts proteins S8 and S17. May interact with IF1 in the 30S initiation complex.

Functionally, with S4 and S5 plays an important role in translational accuracy. Its function is as follows. Interacts with and stabilizes bases of the 16S rRNA that are involved in tRNA selection in the A site and with the mRNA backbone. Located at the interface of the 30S and 50S subunits, it traverses the body of the 30S subunit contacting proteins on the other side and probably holding the rRNA structure together. The combined cluster of proteins S8, S12 and S17 appears to hold together the shoulder and platform of the 30S subunit. The polypeptide is Small ribosomal subunit protein uS12 (Methylobacterium nodulans (strain LMG 21967 / CNCM I-2342 / ORS 2060)).